Here is a 213-residue protein sequence, read N- to C-terminus: ABA-inducible protein PHV A1 (213 aa).

2 disordered regions span residues 1 to 158 (MASN…KDKT) and 182 to 213 (NTLG…TRNH). The span at 13-23 (GETKARTEEKT) shows a compositional bias: basic and acidic residues. 9 LEA 11-mer repeat repeats span residues 27–37 (MGATKQKAGQT), 38–48 (TEATKQKAGET), 49–59 (AEATKQKTGET), 60–70 (AEAAKQKAAEA), 78–88 (AQAAKDKTYET), 89–99 (AQAAKERAAQG), 111–121 (TEAAKQKAAET), 122–132 (TEAAKQKAAEA), and 133–143 (TEAAKQKASDT). The interval 27-143 (MGATKQKAGQ…EAAKQKASDT (117 aa)) is 11 X 11 AA tandem repeats of T-E-A-A-K-Q-K-A-A-E-T. Composition is skewed to basic and acidic residues over residues 41–74 (TKQK…KDKT), 81–98 (AKDK…RAAQ), and 109–140 (EKTE…KQKA). A compositionally biased stretch (low complexity) spans 193–213 (ATKDATTGATVKDTTTTTRNH).

It belongs to the LEA type 4 family.

In Hordeum vulgare (Barley), this protein is ABA-inducible protein PHV A1 (HVA1).